Consider the following 546-residue polypeptide: CTP synthase (546 aa).

Positions 1-266 (MTTRYIFVTG…DELVVKRFSL (266 aa)) are amidoligase domain. Ser14 is a binding site for CTP. Ser14 provides a ligand contact to UTP. Residues 15-20 (SLGKGI) and Asp72 contribute to the ATP site. Mg(2+)-binding residues include Asp72 and Glu140. CTP contacts are provided by residues 147 to 149 (DIE), 187 to 192 (KTKPTQ), and Lys223. UTP-binding positions include 187–192 (KTKPTQ) and Lys223. 239 to 241 (KDV) is an ATP binding site. The Glutamine amidotransferase type-1 domain maps to 291 to 542 (VIGMVGKYIE…VAAASAHQKR (252 aa)). Position 352 (Gly352) interacts with L-glutamine. The active-site Nucleophile; for glutamine hydrolysis is Cys379. Residues 380 to 383 (LGMQ), Glu403, and Arg470 contribute to the L-glutamine site. Active-site residues include His515 and Glu517.

This sequence belongs to the CTP synthase family. In terms of assembly, homotetramer.

The enzyme catalyses UTP + L-glutamine + ATP + H2O = CTP + L-glutamate + ADP + phosphate + 2 H(+). The catalysed reaction is L-glutamine + H2O = L-glutamate + NH4(+). It catalyses the reaction UTP + NH4(+) + ATP = CTP + ADP + phosphate + 2 H(+). It participates in pyrimidine metabolism; CTP biosynthesis via de novo pathway; CTP from UDP: step 2/2. Its activity is regulated as follows. Allosterically activated by GTP, when glutamine is the substrate; GTP has no effect on the reaction when ammonia is the substrate. The allosteric effector GTP functions by stabilizing the protein conformation that binds the tetrahedral intermediate(s) formed during glutamine hydrolysis. Inhibited by the product CTP, via allosteric rather than competitive inhibition. Its function is as follows. Catalyzes the ATP-dependent amination of UTP to CTP with either L-glutamine or ammonia as the source of nitrogen. Regulates intracellular CTP levels through interactions with the four ribonucleotide triphosphates. This is CTP synthase from Shewanella oneidensis (strain ATCC 700550 / JCM 31522 / CIP 106686 / LMG 19005 / NCIMB 14063 / MR-1).